Here is an 865-residue protein sequence, read N- to C-terminus: High affinity cAMP-specific and IBMX-insensitive 3',5'-cyclic phosphodiesterase 8B (865 aa).

2 disordered regions span residues 17-40 (CRDSDESNSPRQTSSVSQGPTAPL) and 52-92 (AMPP…TCRG). Positions 23-36 (SNSPRQTSSVSQGP) are enriched in polar residues. The span at 75–90 (GSGSSTGSSGPATTTC) shows a compositional bias: low complexity. The 72-residue stretch at 247–318 (ACNSVFTALD…DTINTCIKKG (72 aa)) folds into the PAS domain. Positions 373–415 (IHRDSGDNSQTEPHSFRHKSRRKESIDVKSISSRGSDAPSLQN) are disordered. The segment covering 402 to 415 (SISSRGSDAPSLQN) has biased composition (polar residues). Ser-497 carries the post-translational modification Phosphoserine. Residues 519-855 (TINDVPPSIA…KHWKTLDDLK (337 aa)) enclose the PDEase domain. His-595 (proton donor) is an active-site residue. A divalent metal cation contacts are provided by His-599, His-635, and Asp-636. 2 positions are modified to phosphoserine: Ser-731 and Ser-734. Residue Asp-761 participates in a divalent metal cation binding.

It belongs to the cyclic nucleotide phosphodiesterase family. PDE8 subfamily. A divalent metal cation serves as cofactor. In terms of tissue distribution, widely expressed.

The enzyme catalyses 3',5'-cyclic AMP + H2O = AMP + H(+). The protein operates within purine metabolism; 3',5'-cyclic AMP degradation; AMP from 3',5'-cyclic AMP: step 1/1. Functionally, hydrolyzes the second messenger cAMP, which is a key regulator of many important physiological processes. May be involved in specific signaling in the thyroid gland. The chain is High affinity cAMP-specific and IBMX-insensitive 3',5'-cyclic phosphodiesterase 8B (Pde8b) from Mus musculus (Mouse).